A 383-amino-acid polypeptide reads, in one-letter code: UDP-N-acetylglucosamine--N-acetylmuramyl-(pentapeptide) pyrophosphoryl-undecaprenol N-acetylglucosamine transferase (383 aa).

Residues 10–12, asparagine 124, arginine 165, serine 190, isoleucine 245, and glutamine 290 contribute to the UDP-N-acetyl-alpha-D-glucosamine site; that span reads TGG. A disordered region spans residues 364 to 383; sequence PFGQAREPGQKPARPPDLAS.

It belongs to the glycosyltransferase 28 family. MurG subfamily.

The protein resides in the cell inner membrane. The enzyme catalyses di-trans,octa-cis-undecaprenyl diphospho-N-acetyl-alpha-D-muramoyl-L-alanyl-D-glutamyl-meso-2,6-diaminopimeloyl-D-alanyl-D-alanine + UDP-N-acetyl-alpha-D-glucosamine = di-trans,octa-cis-undecaprenyl diphospho-[N-acetyl-alpha-D-glucosaminyl-(1-&gt;4)]-N-acetyl-alpha-D-muramoyl-L-alanyl-D-glutamyl-meso-2,6-diaminopimeloyl-D-alanyl-D-alanine + UDP + H(+). It participates in cell wall biogenesis; peptidoglycan biosynthesis. In terms of biological role, cell wall formation. Catalyzes the transfer of a GlcNAc subunit on undecaprenyl-pyrophosphoryl-MurNAc-pentapeptide (lipid intermediate I) to form undecaprenyl-pyrophosphoryl-MurNAc-(pentapeptide)GlcNAc (lipid intermediate II). The chain is UDP-N-acetylglucosamine--N-acetylmuramyl-(pentapeptide) pyrophosphoryl-undecaprenol N-acetylglucosamine transferase from Anaeromyxobacter dehalogenans (strain 2CP-C).